Reading from the N-terminus, the 93-residue chain is UPF0358 protein OB1428 (93 aa).

Belongs to the UPF0358 family.

This Oceanobacillus iheyensis (strain DSM 14371 / CIP 107618 / JCM 11309 / KCTC 3954 / HTE831) protein is UPF0358 protein OB1428.